A 113-amino-acid polypeptide reads, in one-letter code: Urotensin-2B (113 aa).

The signal sequence occupies residues 1 to 27; that stretch reads MKVFSTSLWCGLLTLLSVMNLFKSVRG. A propeptide spanning residues 28 to 103 is cleaved from the precursor; it reads RPHLSSGHEL…LDNLSSSHTK (76 aa). Cysteine 107 and cysteine 112 are oxidised to a cystine.

It belongs to the urotensin-2 family.

Its subcellular location is the secreted. Functionally, potent vasoconstrictor. The sequence is that of Urotensin-2B (Uts2b) from Mus musculus (Mouse).